The sequence spans 643 residues: Threonine--tRNA ligase (643 aa).

Residues 1-61 (MPIITLPDGS…SEDATLEIIT (61 aa)) form the TGS domain. Positions 243–534 (DHRKIGKALD…ITEEYAGFFP (292 aa)) are catalytic. Zn(2+) is bound by residues Cys-334, His-385, and His-511.

This sequence belongs to the class-II aminoacyl-tRNA synthetase family. As to quaternary structure, homodimer. The cofactor is Zn(2+).

It is found in the cytoplasm. The enzyme catalyses tRNA(Thr) + L-threonine + ATP = L-threonyl-tRNA(Thr) + AMP + diphosphate + H(+). Catalyzes the attachment of threonine to tRNA(Thr) in a two-step reaction: L-threonine is first activated by ATP to form Thr-AMP and then transferred to the acceptor end of tRNA(Thr). Also edits incorrectly charged L-seryl-tRNA(Thr). The protein is Threonine--tRNA ligase of Glaesserella parasuis serovar 5 (strain SH0165) (Haemophilus parasuis).